Consider the following 684-residue polypeptide: Glycine--tRNA ligase beta subunit (684 aa).

It belongs to the class-II aminoacyl-tRNA synthetase family. In terms of assembly, tetramer of two alpha and two beta subunits.

The protein localises to the cytoplasm. The enzyme catalyses tRNA(Gly) + glycine + ATP = glycyl-tRNA(Gly) + AMP + diphosphate. The sequence is that of Glycine--tRNA ligase beta subunit from Pseudomonas savastanoi pv. phaseolicola (strain 1448A / Race 6) (Pseudomonas syringae pv. phaseolicola (strain 1448A / Race 6)).